Here is a 124-residue protein sequence, read N- to C-terminus: Small ribosomal subunit protein uS12 (124 aa).

3-methylthioaspartic acid is present on Asp-89.

Belongs to the universal ribosomal protein uS12 family. In terms of assembly, part of the 30S ribosomal subunit. Contacts proteins S8 and S17. May interact with IF1 in the 30S initiation complex.

In terms of biological role, with S4 and S5 plays an important role in translational accuracy. Functionally, interacts with and stabilizes bases of the 16S rRNA that are involved in tRNA selection in the A site and with the mRNA backbone. Located at the interface of the 30S and 50S subunits, it traverses the body of the 30S subunit contacting proteins on the other side and probably holding the rRNA structure together. The combined cluster of proteins S8, S12 and S17 appears to hold together the shoulder and platform of the 30S subunit. In Prochlorococcus marinus (strain SARG / CCMP1375 / SS120), this protein is Small ribosomal subunit protein uS12.